Reading from the N-terminus, the 282-residue chain is HTH-type transcriptional activator RhaR (282 aa).

Residues aspartate 179–leucine 277 enclose the HTH araC/xylS-type domain. 2 consecutive DNA-binding regions (H-T-H motif) follow at residues aspartate 196–threonine 217 and isoleucine 244–threonine 267.

As to quaternary structure, binds DNA as a dimer.

The protein resides in the cytoplasm. Functionally, activates expression of the rhaSR operon in response to L-rhamnose. This is HTH-type transcriptional activator RhaR from Escherichia coli (strain K12 / MC4100 / BW2952).